The primary structure comprises 291 residues: N-acetylmannosamine kinase (291 aa).

Residues 5–12 and 132–139 each bind ATP; these read AIDIGGTK and GVGGGVVS. Positions 156, 166, 168, and 173 each coordinate Zn(2+).

Belongs to the ROK (NagC/XylR) family. NanK subfamily. Homodimer.

The catalysed reaction is an N-acyl-D-mannosamine + ATP = an N-acyl-D-mannosamine 6-phosphate + ADP + H(+). Its pathway is amino-sugar metabolism; N-acetylneuraminate degradation; D-fructose 6-phosphate from N-acetylneuraminate: step 2/5. Catalyzes the phosphorylation of N-acetylmannosamine (ManNAc) to ManNAc-6-P. The sequence is that of N-acetylmannosamine kinase from Escherichia coli O6:K15:H31 (strain 536 / UPEC).